Reading from the N-terminus, the 1298-residue chain is Phosphoribosylformylglycinamidine synthase (1298 aa).

A disordered region spans residues 298-328 (TAIAPFPGASTGSGGEIRDEGATGRGAKPKA). Residues 305–316 (GASTGSGGEIRD), 384–386 (TGY), and A676 contribute to the ATP site. Mg(2+) contacts are provided by D677, E716, N720, and D884. S886 is an ATP binding site. The Glutamine amidotransferase type-1 domain occupies 1045–1298 (VAILREQGVN…MFRNARVWVD (254 aa)). The active-site Nucleophile is C1138. Active-site residues include H1263 and E1265.

It in the N-terminal section; belongs to the FGAMS family. As to quaternary structure, monomer.

It localises to the cytoplasm. It catalyses the reaction N(2)-formyl-N(1)-(5-phospho-beta-D-ribosyl)glycinamide + L-glutamine + ATP + H2O = 2-formamido-N(1)-(5-O-phospho-beta-D-ribosyl)acetamidine + L-glutamate + ADP + phosphate + H(+). It functions in the pathway purine metabolism; IMP biosynthesis via de novo pathway; 5-amino-1-(5-phospho-D-ribosyl)imidazole from N(2)-formyl-N(1)-(5-phospho-D-ribosyl)glycinamide: step 1/2. In terms of biological role, phosphoribosylformylglycinamidine synthase involved in the purines biosynthetic pathway. Catalyzes the ATP-dependent conversion of formylglycinamide ribonucleotide (FGAR) and glutamine to yield formylglycinamidine ribonucleotide (FGAM) and glutamate. This chain is Phosphoribosylformylglycinamidine synthase, found in Pseudomonas aeruginosa (strain ATCC 15692 / DSM 22644 / CIP 104116 / JCM 14847 / LMG 12228 / 1C / PRS 101 / PAO1).